The sequence spans 291 residues: Venom metalloproteinase inhibitor DM43 (291 aa).

Ig-like V-type domains follow at residues 22–79 (TNVT…ILTS) and 114–171 (GLET…PASA). The N-linked (GlcNAc...) asparagine glycan is linked to N23. Cystine bridges form between C28–C74 and C121–C163. N-linked (GlcNAc...) asparagine glycans are attached at residues N156, N160, and N175. Residues 191–288 (PKANFYILND…DSNVLELDLS (98 aa)) form the Ig-like V-type 3 domain. Residues C213 and C265 are joined by a disulfide bond.

Homodimer. In terms of processing, N-glycosylated. As to expression, blood and milk.

Functionally, metalloproteinase inhibitor. The chain is Venom metalloproteinase inhibitor DM43 from Didelphis marsupialis (Southern opossum).